A 214-amino-acid chain; its full sequence is Mediator of RNA polymerase II transcription subunit 29 (214 aa).

Residues 1–78 (MMNQMGMHMQ…QQQSQQTEKV (78 aa)) form a disordered region. Gly residues predominate over residues 15-34 (VPGGPGGPVGMAGGPVGGVG). Residues 44–74 (QMQQQQQVAAQQQQQQQQQQQAQAHQQQSQQ) show a composition bias toward low complexity.

It belongs to the Mediator complex subunit 29 family. As to quaternary structure, component of the Mediator complex.

It is found in the nucleus. Functionally, component of the Mediator complex, a coactivator involved in the regulated transcription of nearly all RNA polymerase II-dependent genes. Mediator functions as a bridge to convey information from gene-specific regulatory proteins to the basal RNA polymerase II transcription machinery. Mediator is recruited to promoters by direct interactions with regulatory proteins and serves as a scaffold for the assembly of a functional preinitiation complex with RNA polymerase II and the general transcription factors. The polypeptide is Mediator of RNA polymerase II transcription subunit 29 (ix) (Aedes aegypti (Yellowfever mosquito)).